The primary structure comprises 790 residues: Pleckstrin homology domain-containing family G member 6 (790 aa).

The disordered stretch occupies residues 63-91 (SGQARGLSPMRLRDPEPEKRHGGHVGAGL). A compositionally biased stretch (basic and acidic residues) spans 73 to 82 (RLRDPEPEKR). The 193-residue stretch at 161–353 (HQQEALWELL…ESFLRHINGQ (193 aa)) folds into the DH domain. The PH domain maps to 409 to 509 (QLLLEGPVRV…WLEKTQQAQA (101 aa)). Basic and acidic residues-rich tracts occupy residues 529-538 (LYRDQDRESP) and 625-635 (ELRDIPLRPHP). 3 disordered regions span residues 529-677 (LYRD…ASER), 690-730 (LRGQ…HTSL), and 748-790 (SQRI…ASEV). Residues 748–762 (SQRIEGAEEPRDSRP) are compositionally biased toward basic and acidic residues.

Interacts with MYH10. Interacts with ELMO1 and EZR (in an open conformation). Interacts with CSPP1. In terms of tissue distribution, highest expression in the placenta. Low levels in small intestine, lung, liver, kidney, thymus and heart.

It is found in the cell projection. The protein localises to the microvillus. The protein resides in the cytoplasm. Its subcellular location is the cytoskeleton. It localises to the spindle. It is found in the spindle pole. The protein localises to the cleavage furrow. Its function is as follows. Guanine nucleotide exchange factor activating the small GTPase RHOA, which, in turn, induces myosin filament formation. Also activates RHOG. Does not activate RAC1, or to a much lower extent than RHOA and RHOG. Part of a functional unit, involving PLEKHG6, MYH10 and RHOA, at the cleavage furrow to advance furrow ingression during cytokinesis. In epithelial cells, required for the formation of microvilli and membrane ruffles on the apical pole. Along with EZR, required for normal macropinocytosis. This is Pleckstrin homology domain-containing family G member 6 (PLEKHG6) from Homo sapiens (Human).